The primary structure comprises 385 residues: Glycine/sarcosine/betaine reductase complex component C subunit alpha (385 aa).

Cys359 is an active-site residue.

As to quaternary structure, heterooctamer of four alpha and four beta subunits. Component of the glycine, sarcosine and betaine reductase complexes, together with proteins A and B.

It catalyses the reaction acetyl phosphate + [thioredoxin]-disulfide + NH4(+) + H2O = [thioredoxin]-dithiol + glycine + phosphate + H(+). It carries out the reaction acetyl phosphate + methylamine + [thioredoxin]-disulfide + H2O = sarcosine + [thioredoxin]-dithiol + phosphate + H(+). The catalysed reaction is acetyl phosphate + trimethylamine + [thioredoxin]-disulfide + H2O = glycine betaine + [thioredoxin]-dithiol + phosphate + H(+). Functionally, in the first step of glycine, betaine and sarcosine reductases, the substrate is bound to component PB via a Schiff base intermediate. Then the PB-activated substrate is nucleophilically attacked by the selenol anion of component PA to transform it to a carboxymethylated selenoether and the respective amine. By action of component PC, acetyl phosphate is formed, leaving component PA in its oxidized state. Finally component PA becomes reduced by the thioredoxin system to start a new catalytic cycle of reductive deamination. The chain is Glycine/sarcosine/betaine reductase complex component C subunit alpha (grdD) from Peptoclostridium acidaminophilum (Eubacterium acidaminophilum).